Here is a 383-residue protein sequence, read N- to C-terminus: Probable L-tyrosine/L-aspartate decarboxylase (383 aa).

An N6-(pyridoxal phosphate)lysine modification is found at Lys-227.

It belongs to the group II decarboxylase family. MfnA subfamily. It depends on pyridoxal 5'-phosphate as a cofactor.

It catalyses the reaction L-tyrosine + H(+) = tyramine + CO2. It carries out the reaction L-aspartate + H(+) = beta-alanine + CO2. It functions in the pathway cofactor biosynthesis; methanofuran biosynthesis. Its pathway is cofactor biosynthesis; coenzyme A biosynthesis. In terms of biological role, catalyzes the decarboxylation of L-tyrosine to produce tyramine for methanofuran biosynthesis. Can also catalyze the decarboxylation of L-aspartate to produce beta-alanine for coenzyme A (CoA) biosynthesis. The protein is Probable L-tyrosine/L-aspartate decarboxylase of Methanothrix thermoacetophila (strain DSM 6194 / JCM 14653 / NBRC 101360 / PT) (Methanosaeta thermophila).